A 1644-amino-acid polypeptide reads, in one-letter code: Peroxisome proliferator-activated receptor gamma coactivator-related protein 1 (1644 aa).

7 disordered regions span residues 1–61, 170–249, 429–616, 646–761, 773–884, 978–1074, and 1322–1507; these read MAAR…DSSF, PERD…EVAG, LTPK…TSPV, AADP…PETP, SAPA…QPPG, STVS…EGVV, and AAPP…NDHY. The span at 12 to 22 shows a compositional bias: pro residues; sequence APPPTGGPGPD. The segment covering 213–222 has biased composition (low complexity); it reads SSPKLPSWRP. Serine 232 carries the phosphoserine modification. Positions 425-460 are necessary for interaction with CREB1 and NRF1 and for transcriptional coactivation; the sequence is IMESLTPKEPQSLPASASQGSQKVPRKGRKKKNKEQ. A compositionally biased stretch (polar residues) spans 437–446; it reads LPASASQGSQ. The segment covering 448-457 has biased composition (basic residues); sequence VPRKGRKKKN. Residues 475-496 are compositionally biased toward polar residues; the sequence is SSRGQSTVSAEVNSQAGSSQKQ. The span at 515 to 524 shows a compositional bias: low complexity; that stretch reads RAWARAWAAA. Serine 541 carries the post-translational modification Phosphoserine. A compositionally biased stretch (polar residues) spans 556–572; the sequence is ETSQANPTLSLNDSAQA. Over residues 691-702 the composition is skewed to basic and acidic residues; sequence DHPKVVSPEGKD. Positions 811–821 are enriched in polar residues; sequence MVSTHSEQVSS. 2 stretches are compositionally biased toward pro residues: residues 828–864 and 874–884; these read VRPPPPPLPSVSPAGPIPSTVPAPLPPFPPSVPPLLP and RLPPPPLQPPG. 3 positions are modified to phosphoserine: serine 1059, serine 1393, and serine 1395. The tract at residues 1361-1432 is necessary for interaction with CREB1 and NRF1; sequence EASPCRSEMN…SSSSSVSSSS (72 aa). Low complexity-rich tracts occupy residues 1409–1433 and 1453–1489; these read SRSVSSGSSRTSEASSSSSVSSSSR and SSCSSSGRSRRCSSSSSSSSSSSSCSSRSRSPSVSPC. The 77-residue stretch at 1523–1599 folds into the RRM domain; the sequence is RVVFIGKIPG…QPFDLCFGGR (77 aa).

In terms of assembly, interacts with CREB1 and NRF1. As to expression, expressed in liver, heart, skeletal muscle, kidney and white and brown adipose tissues.

The protein resides in the nucleus. Its function is as follows. Acts as a coactivator during transcriptional activation of nuclear genes related to mitochondrial biogenesis and cell growth. Involved in the transcription coactivation of CREB and NRF1 target genes. This is Peroxisome proliferator-activated receptor gamma coactivator-related protein 1 (Pprc1) from Mus musculus (Mouse).